We begin with the raw amino-acid sequence, 957 residues long: Valine--tRNA ligase (957 aa).

The short motif at 42 to 52 (PNVTGSLHMGH) is the 'HIGH' region element. The short motif at 554–558 (KMSKS) is the 'KMSKS' region element. Lys-557 is an ATP binding site. Residues 890–956 (DKDAELARLA…LEAQQETIAA (67 aa)) adopt a coiled-coil conformation.

It belongs to the class-I aminoacyl-tRNA synthetase family. ValS type 1 subfamily. Monomer.

Its subcellular location is the cytoplasm. It carries out the reaction tRNA(Val) + L-valine + ATP = L-valyl-tRNA(Val) + AMP + diphosphate. Functionally, catalyzes the attachment of valine to tRNA(Val). As ValRS can inadvertently accommodate and process structurally similar amino acids such as threonine, to avoid such errors, it has a 'posttransfer' editing activity that hydrolyzes mischarged Thr-tRNA(Val) in a tRNA-dependent manner. The sequence is that of Valine--tRNA ligase from Aliivibrio fischeri (strain ATCC 700601 / ES114) (Vibrio fischeri).